The following is a 626-amino-acid chain: FAD-binding monooxygenase moxY (626 aa).

A compositionally biased stretch (low complexity) spans 1–23 (MAPFLSAHGESASSSSSSSPTPS). Residues 1–47 (MAPFLSAHGESASSSSSSSPTPSRHTRNQHVDYSTPGSTGYNIPQNT) are disordered. The span at 31 to 47 (VDYSTPGSTGYNIPQNT) shows a compositional bias: polar residues. Residues 96-99 (TWLE), 108-109 (DI), and Y114 each bind FAD. 106-108 (GCD) lines the NADP(+) pocket. Residues 243–249 (SGASSIQ) and 266–267 (RT) contribute to the NADP(+) site.

It belongs to the FAD-binding monooxygenase family. FAD serves as cofactor.

The protein operates within mycotoxin biosynthesis. FAD-binding monooxygenase; part of the fragmented gene cluster that mediates the biosynthesis of dothistromin (DOTH), a polyketide toxin very similar in structure to the aflatoxin precursor, versicolorin B. The first step of the pathway is the conversion of acetate to norsolorinic acid (NOR) and requires the fatty acid synthase subunits hexA and hexB, as well as the polyketide synthase pksA. PksA combines a hexanoyl starter unit and 7 malonyl-CoA extender units to synthesize the precursor NOR. The hexanoyl starter unit is provided to the acyl-carrier protein (ACP) domain by the fungal fatty acid synthase hexA/hexB. The second step is the conversion of NOR to averantin (AVN) and requires the norsolorinic acid ketoreductase nor1, which catalyzes the dehydration of norsolorinic acid to form (1'S)-averantin. The cytochrome P450 monooxygenase avnA then catalyzes the hydroxylation of AVN to 5'hydroxyaverantin (HAVN). The next step is performed by adhA that transforms HAVN to averufin (AVF). Averufin might then be converted to hydroxyversicolorone by cypX and avfA. Hydroxyversicolorone is further converted versiconal hemiacetal acetate (VHA) by moxY. VHA is then the substrate for the versiconal hemiacetal acetate esterase est1 to yield versiconal (VAL). Versicolorin B synthase vbsA then converts VAL to versicolorin B (VERB) by closing the bisfuran ring. Then, the activity of the versicolorin B desaturase verB leads to versicolorin A (VERA). DotB, a predicted chloroperoxidase, may perform epoxidation of the A-ring of VERA. Alternatively, a cytochrome P450, such as cypX or avnA could catalyze this step. It is also possible that another, uncharacterized, cytochrome P450 enzyme is responsible for this step. Opening of the epoxide could potentially be achieved by the epoxide hydrolase epoA. However, epoA seems not to be required for DOTH biosynthesis, but other epoxide hydrolases may have the ability to complement this hydrolysis. Alternatively, opening of the epoxide ring could be achieved non-enzymatically. The next step is the deoxygenation of ring A to yield the 5,8-dihydroxyanthraquinone which is most likely catalyzed by the NADPH dehydrogenase encoded by ver1. The last stages of DOTH biosynthesis are proposed to involve hydroxylation of the bisfuran. OrdB and norB might have oxidative roles here. An alternative possibility is that cytochrome P450 monoogenases such as avnA and cypX might perform these steps in addition to previously proposed steps. This is FAD-binding monooxygenase moxY from Dothistroma septosporum (Red band needle blight fungus).